A 43-amino-acid chain; its full sequence is Neurotrophic factor BDNF (43 aa).

This sequence belongs to the NGF-beta family.

The protein resides in the secreted. Its function is as follows. Promotes the survival of neuronal populations that are all located either in the central nervous system or directly connected to it. In Macrovipera lebetinus (Levantine viper), this protein is Neurotrophic factor BDNF (BDNF).